A 92-amino-acid polypeptide reads, in one-letter code: Putative septation protein SpoVG (92 aa).

It belongs to the SpoVG family.

In terms of biological role, could be involved in septation. The protein is Putative septation protein SpoVG of Clostridium botulinum (strain Eklund 17B / Type B).